The primary structure comprises 199 residues: NAD(P)H dehydrogenase (quinone) (199 aa).

The region spanning 4 to 190 (VLVLYYSSYG…EGARHQGELV (187 aa)) is the Flavodoxin-like domain. Residues 10-15 (SSYGHI) and 78-80 (TRY) contribute to the FMN site. Tyr12 lines the NAD(+) pocket. Trp98 is a binding site for substrate. FMN contacts are provided by residues 113 to 119 (STATQHG) and His134.

This sequence belongs to the WrbA family. The cofactor is FMN.

The catalysed reaction is a quinone + NADH + H(+) = a quinol + NAD(+). The enzyme catalyses a quinone + NADPH + H(+) = a quinol + NADP(+). The sequence is that of NAD(P)H dehydrogenase (quinone) from Paraburkholderia phymatum (strain DSM 17167 / CIP 108236 / LMG 21445 / STM815) (Burkholderia phymatum).